A 301-amino-acid chain; its full sequence is Phosphatidylglycerol--prolipoprotein diacylglyceryl transferase (301 aa).

Transmembrane regions (helical) follow at residues 10-30 (IAFSLGPVKVHWYGLMYLAGF), 57-77 (LLFYAMMGVVLGGRVGYMLFY), 92-112 (VWEGGMSFHGGLIGVLLAVAW), and 119-139 (MHMFDVVDFCAPLVPVGLGFG). R140 lines the a 1,2-diacyl-sn-glycero-3-phospho-(1'-sn-glycerol) pocket. 3 helical membrane passes run 202–222 (PSQLYEAFLEGLVMFIVLWLF), 230–250 (YAVSGLFALLYGVFRFLVEFV), and 264–284 (LTRGQILSLPLIVIGLFLFWL).

Belongs to the Lgt family.

It localises to the cell inner membrane. The enzyme catalyses L-cysteinyl-[prolipoprotein] + a 1,2-diacyl-sn-glycero-3-phospho-(1'-sn-glycerol) = an S-1,2-diacyl-sn-glyceryl-L-cysteinyl-[prolipoprotein] + sn-glycerol 1-phosphate + H(+). Its pathway is protein modification; lipoprotein biosynthesis (diacylglyceryl transfer). In terms of biological role, catalyzes the transfer of the diacylglyceryl group from phosphatidylglycerol to the sulfhydryl group of the N-terminal cysteine of a prolipoprotein, the first step in the formation of mature lipoproteins. The chain is Phosphatidylglycerol--prolipoprotein diacylglyceryl transferase from Xylella fastidiosa (strain M12).